The primary structure comprises 227 residues: MFS-type transporter FVEG_08288 (227 aa).

A helical transmembrane segment spans residues 8–28 (VFLTVLIAIASCSVYILNIAI). The N-linked (GlcNAc...) asparagine glycan is linked to Asn40. 5 helical membrane passes run 43–63 (TVGL…MAGG), 100–120 (VANT…YYGV), 122–142 (FMVP…HFTL), 164–181 (FVRN…APWM), and 188–208 (YMMT…IWLI).

This sequence belongs to the major facilitator superfamily.

The protein resides in the membrane. Its function is as follows. MFS-type transporter; part of the Fusarium detoxification of benzoxazolinone cluster 1 (FDB1) involved in the degradation of benzoxazolinones produced by the host plant. Maize, wheat, and rye produce the 2 benzoxazinone phytoanticipins 2,4-dihy-droxy-7-methoxy-1,4-benzoxazin-3-one (DIMBOA) and 2,4-dihydroxy-1,4-benzoxazin-3-one (DIBOA) that, due to their inherent instability once released, spontaneously degrade to the more stable corresponding benzoxazolinones, 6-methoxy-2-benzoxazolinone (MBOA) and 2-benzoxazolinone (BOA), respectively. This chain is MFS-type transporter FVEG_08288, found in Gibberella moniliformis (strain M3125 / FGSC 7600) (Maize ear and stalk rot fungus).